Consider the following 357-residue polypeptide: Protein FAM118A (357 aa).

Met-1 carries the post-translational modification N-acetylmethionine. The helical transmembrane segment at 30-46 threads the bilayer; that stretch reads LLLVIGTGVSAAVAPGI. Ser-311 carries the post-translational modification Phosphoserine.

The protein belongs to the FAM118 family.

The protein resides in the membrane. The polypeptide is Protein FAM118A (Fam118a) (Mus musculus (Mouse)).